A 93-amino-acid chain; its full sequence is Small ribosomal subunit protein bS20 (93 aa).

It belongs to the bacterial ribosomal protein bS20 family.

Its function is as follows. Binds directly to 16S ribosomal RNA. The protein is Small ribosomal subunit protein bS20 of Hydrogenobaculum sp. (strain Y04AAS1).